A 687-amino-acid polypeptide reads, in one-letter code: Chloride channel protein ClC-Kb (687 aa).

Residues 1–50 (MEELVGLREGASKKPVPLQELWGPCPRIRRNIQGGLEWLKERLFRVGEDW) are Cytoplasmic-facing. 2 helical membrane passes run 51-82 (YFLVALGVLMALISYAMNFTIGRVVRAHKWLY) and 91-111 (LRYLSWTVYPVALLSFSSGFS). The helical intramembrane region spans 116–127 (PSSGGSGIPEVK). Residue serine 121 coordinates chloride. Helical transmembrane passes span 141–160 (IKNFGAKVVGLSCTLATGST) and 161–180 (IFLGKLGPFVHLSVMIAAYL). The helical intramembrane region spans 203–224 (AGAAVGVATVFAAPISGVLFSI). Residues 236–255 (YWRGFFAATCGAFMFHLLAV) traverse the membrane as a helical segment. Residues glutamate 259, glutamate 261, aspartate 278, and glutamate 281 each contribute to the Ca(2+) site. The next 2 helical transmembrane spans lie at 282 to 310 (IFFFVALGAICGILSCGYNYSQRTFLFFL) and 325 to 342 (PLYSALAAVVLASITYPP). Positions 349 to 360 (ASRLSMSEHLET) form an intramembrane region, helical. 2 helical membrane-spanning segments follow: residues 400–420 (GTLVFFLVMKFWMLILATTIP) and 421–440 (IPAGYFLPIFIYGAVIGRLF). Phenylalanine 426 provides a ligand contact to chloride. An intramembrane region (helical) is located at residues 464-496 (GAYALAGAAAFSGAVTHTLSTALLAFEVTGQLV). A helical transmembrane segment spans residues 500 to 520 (PVLMAVLAANAISQSFQPSFY). The Cytoplasmic portion of the chain corresponds to 521-687 (DGTIIVKKLP…STLTNPPAPK (167 aa)). CBS domains are found at residues 551 to 609 (MNCA…EPAS) and 626 to 687 (CPTQ…PAPK).

This sequence belongs to the chloride channel (TC 2.A.49) family. CLCNKB subfamily. Homodimer. Interacts with BSND. N-glycosylated. In terms of tissue distribution, specifically expressed in the kidney, predominantly in the outer medulla and cortex. All nephron segments expressing BSND also express CLCNK proteins.

The protein resides in the basolateral cell membrane. The catalysed reaction is chloride(in) = chloride(out). The enzyme catalyses iodide(out) = iodide(in). It catalyses the reaction nitrate(in) = nitrate(out). It carries out the reaction bromide(in) = bromide(out). Anion-selective channel permeable to small monovalent anions with ion selectivity for chloride &gt; bromide &gt; nitrate &gt; iodide. Forms a homodimeric channel where each subunit has its own ion conduction pathway. May conduct double-barreled currents controlled by two types of gates, two fast gates that control each subunit independently and a slow common gate that opens and shuts off both subunits simultaneously. Assembles with the regulatory subunit BSND/Barttin for sorting at the basolateral plasma membrane domain and functional switch to the ion conducting state. CLCNKB:BSND channels display mostly a linear current-voltage relationship controlled by common gate. Mediates chloride conductance along nephron segments, namely the thick ascending limb of Henle's loop, convoluted tubule and the collecting duct, contributing to the maintenance of systemic acid-base and electrolyte homeostasis. Conducts chloride currents in the stria vascularis of the inner ear to establish the endocochlear potential necessary for normal hearing. This is Chloride channel protein ClC-Kb from Mus musculus (Mouse).